The sequence spans 289 residues: Mitochondrial fission regulator 1-like (289 aa).

A Phosphothreonine modification is found at threonine 27. A Phosphoserine modification is found at serine 38. Residue serine 100 is modified to Phosphoserine; by AMPK. Residues serine 107, serine 221, and serine 222 each carry the phosphoserine modification. Serine 235 is modified (phosphoserine; by AMPK). Residues serine 258 and serine 270 each carry the phosphoserine modification.

Belongs to the MTFR1 family. Post-translationally, phosphorylated by AMPK. Upon stress, phosphorylation at Ser-100 and Ser-235 by AMPK is sufficient to induce mitochondrial fragmentation.

Its subcellular location is the mitochondrion outer membrane. Functionally, mitochondrial protein required for adaptation of miochondrial dynamics to metabolic changes. Regulates mitochondrial morphology at steady state and mediates AMPK-dependent stress-induced mitochondrial fragmentation via the control of OPA1 levels. In Mus musculus (Mouse), this protein is Mitochondrial fission regulator 1-like (Mtfr1l).